The chain runs to 363 residues: Alanine racemase (363 aa).

Lys-35 serves as the catalytic Proton acceptor; specific for D-alanine. N6-(pyridoxal phosphate)lysine is present on Lys-35. A substrate-binding site is contributed by Arg-134. Residue Tyr-259 is the Proton acceptor; specific for L-alanine of the active site. Met-307 provides a ligand contact to substrate.

It belongs to the alanine racemase family. The cofactor is pyridoxal 5'-phosphate.

It catalyses the reaction L-alanine = D-alanine. It functions in the pathway amino-acid biosynthesis; D-alanine biosynthesis; D-alanine from L-alanine: step 1/1. Its function is as follows. Catalyzes the interconversion of L-alanine and D-alanine. May also act on other amino acids. The polypeptide is Alanine racemase (alr) (Shewanella denitrificans (strain OS217 / ATCC BAA-1090 / DSM 15013)).